Reading from the N-terminus, the 416-residue chain is Serine hydroxymethyltransferase (416 aa).

Residues L121 and 125–127 (GHL) each bind (6S)-5,6,7,8-tetrahydrofolate. At K229 the chain carries N6-(pyridoxal phosphate)lysine. Position 354–356 (354–356 (SPF)) interacts with (6S)-5,6,7,8-tetrahydrofolate.

This sequence belongs to the SHMT family. In terms of assembly, homodimer. Requires pyridoxal 5'-phosphate as cofactor.

It is found in the cytoplasm. It catalyses the reaction (6R)-5,10-methylene-5,6,7,8-tetrahydrofolate + glycine + H2O = (6S)-5,6,7,8-tetrahydrofolate + L-serine. It participates in one-carbon metabolism; tetrahydrofolate interconversion. It functions in the pathway amino-acid biosynthesis; glycine biosynthesis; glycine from L-serine: step 1/1. Functionally, catalyzes the reversible interconversion of serine and glycine with tetrahydrofolate (THF) serving as the one-carbon carrier. This reaction serves as the major source of one-carbon groups required for the biosynthesis of purines, thymidylate, methionine, and other important biomolecules. Also exhibits THF-independent aldolase activity toward beta-hydroxyamino acids, producing glycine and aldehydes, via a retro-aldol mechanism. This chain is Serine hydroxymethyltransferase, found in Halorhodospira halophila (strain DSM 244 / SL1) (Ectothiorhodospira halophila (strain DSM 244 / SL1)).